The chain runs to 741 residues: MIPVTILCVLLCLNLAWAQDGKTTFEKEGGGGRGPRILENMHESSCKYEKNWPICVDDDWGTKCPSCCRMQGIIDDTDQNYSQRIDNIRQQLADSQNKYKTSNRVIVETINILKPGLEGAQQLDENYGHVSTELRRRIVTLKQRVATQVNRIKALQNSIQEQVVEMKRLEVDIDIKIRACKGSCARSFDYQVDKEGYDNIQKHLTQASSIDMHPDFQTTTLSTLKMRPLKDSNVPEHFKLKPSPEMQAMSAFNNIKQMQVVLERPETDHVAEARGDSSPSHTGKLITSSHRRESPSLVDKTSSASSVHRCTRTVTKKVISGPDGPREEIVEKMVSSDGSDCSHLQGGREGSTYHFSGTGDFHKLDRLLPDLESFFTHDSVSTSSRHSIGSSTSSHVTGAGSSHLGTGGKDKFTDLGEEEEDDFGGLQPSGFAAGSASHSKTVLTSSSSSFNKGGSTFETKSLKTRETSEQLGGVQHDQSAEDTPDFKARSFRPAAMSTRRSYNGKDCDDIRQKHTSGAKSGIFKIKPEGSNKVLSVYCDQETTLGGWLLIQQRMDGSVNFNRTWQDYRRGFGSVDGKGQGELWLGNENIHLLTQNDTLLRVELEDWDGNAAYAEYIVQVGTEAEGYALTVSSYEGTAGDALVAGWLEEGSEYTSHAQMQFSTFDRDQDHWEESCAEVYGGGWWYNSCQAANLNGIYYPGGHYDPRYNVPYEIENGVVWIPFRASDYSLKVVRMKIRPLETL.

The first 18 residues, 1–18 (MIPVTILCVLLCLNLAWA), serve as a signal peptide directing secretion. Residue Q19 is modified to Pyrrolidone carboxylic acid. Residues 67 to 506 (CCRMQGIIDD…STRRSYNGKD (440 aa)) are a coiled coil. The tract at residues 270–307 (VAEARGDSSPSHTGKLITSSHRRESPSLVDKTSSASSV) is disordered. Residues 277–288 (SSPSHTGKLITS) are compositionally biased toward polar residues. C310 and C341 are joined by a disulfide. 2 stretches are compositionally biased toward low complexity: residues 381–398 (STSSRHSIGSSTSSHVTG) and 435–449 (SASHSKTVLTSSSSS). The segment at 381 to 510 (STSSRHSIGS…SYNGKDCDDI (130 aa)) is disordered. Residues 450–459 (FNKGGSTFET) are compositionally biased toward polar residues. The Fibrinogen C-terminal domain maps to 498–739 (TRRSYNGKDC…VVRMKIRPLE (242 aa)). Residues D666, D668, W670, and E672 each coordinate Ca(2+). C674 and C687 are disulfide-bonded.

As to quaternary structure, heterohexamer; disulfide linked. Contains 2 sets of 3 non-identical chains (alpha, beta and gamma). The 2 heterotrimers are in head to head conformation with the N-termini in a small central domain. Conversion of fibrinogen to fibrin is triggered by thrombin, which cleaves fibrinopeptides A and B from alpha and beta chains, and thus exposes the N-terminal polymerization sites responsible for the formation of the soft clot. The soft clot is converted into the hard clot by factor XIIIA which catalyzes the epsilon-(gamma-glutamyl)lysine cross-linking between gamma chains (stronger) and between alpha chains (weaker) of different monomers. Post-translationally, forms F13A-mediated cross-links between a glutamine and the epsilon-amino group of a lysine residue, forming fibronectin-fibrinogen heteropolymers.

It is found in the secreted. Its function is as follows. Cleaved by the protease thrombin to yield monomers which, together with fibrinogen beta (FGB) and fibrinogen gamma (FGG), polymerize to form an insoluble fibrin matrix. Fibrin has a major function in hemostasis as one of the primary components of blood clots. The polypeptide is Fibrinogen alpha chain (FGA) (Gallus gallus (Chicken)).